Here is a 339-residue protein sequence, read N- to C-terminus: Dihydroorotate dehydrogenase (quinone) (339 aa).

FMN contacts are provided by residues 62-66 (AGLDK) and threonine 86. A substrate-binding site is contributed by lysine 66. 111–115 (NRMGF) lines the substrate pocket. Positions 139 and 172 each coordinate FMN. Asparagine 172 is a binding site for substrate. Serine 175 (nucleophile) is an active-site residue. Asparagine 177 serves as a coordination point for substrate. FMN is bound by residues lysine 217 and threonine 245. 246 to 247 (NT) lines the substrate pocket. FMN is bound by residues glycine 268, glycine 297, and 318-319 (YS).

It belongs to the dihydroorotate dehydrogenase family. Type 2 subfamily. As to quaternary structure, monomer. The cofactor is FMN.

It is found in the cell membrane. It catalyses the reaction (S)-dihydroorotate + a quinone = orotate + a quinol. The protein operates within pyrimidine metabolism; UMP biosynthesis via de novo pathway; orotate from (S)-dihydroorotate (quinone route): step 1/1. Catalyzes the conversion of dihydroorotate to orotate with quinone as electron acceptor. This Shewanella denitrificans (strain OS217 / ATCC BAA-1090 / DSM 15013) protein is Dihydroorotate dehydrogenase (quinone).